The sequence spans 179 residues: Large ribosomal subunit protein uL5 (179 aa).

The protein belongs to the universal ribosomal protein uL5 family. Part of the 50S ribosomal subunit; part of the 5S rRNA/L5/L18/L25 subcomplex. Contacts the 5S rRNA and the P site tRNA. Forms a bridge to the 30S subunit in the 70S ribosome.

Functionally, this is one of the proteins that bind and probably mediate the attachment of the 5S RNA into the large ribosomal subunit, where it forms part of the central protuberance. In the 70S ribosome it contacts protein S13 of the 30S subunit (bridge B1b), connecting the 2 subunits; this bridge is implicated in subunit movement. Contacts the P site tRNA; the 5S rRNA and some of its associated proteins might help stabilize positioning of ribosome-bound tRNAs. This chain is Large ribosomal subunit protein uL5, found in Actinobacillus pleuropneumoniae serotype 5b (strain L20).